The primary structure comprises 240 residues: uncharacterized protein (240 aa).

The interval 216 to 240 (MKQSKNKPRIRQAVGATRQCRKPQA) is disordered.

This is an uncharacterized protein from Escherichia coli (strain K12).